Here is a 412-residue protein sequence, read N- to C-terminus: Multifunctional CCA protein (412 aa).

ATP-binding residues include Gly-8 and Arg-11. Positions 8 and 11 each coordinate CTP. Residues Asp-21 and Asp-23 each coordinate Mg(2+). 3 residues coordinate ATP: Arg-91, Arg-137, and Arg-140. Arg-91, Arg-137, and Arg-140 together coordinate CTP. The HD domain maps to 228–329; that stretch reads TGIHTLMTLS…VKLFDSIDAW (102 aa).

It belongs to the tRNA nucleotidyltransferase/poly(A) polymerase family. Bacterial CCA-adding enzyme type 1 subfamily. In terms of assembly, monomer. Can also form homodimers and oligomers. The cofactor is Mg(2+). Requires Ni(2+) as cofactor.

It catalyses the reaction a tRNA precursor + 2 CTP + ATP = a tRNA with a 3' CCA end + 3 diphosphate. It carries out the reaction a tRNA with a 3' CCA end + 2 CTP + ATP = a tRNA with a 3' CCACCA end + 3 diphosphate. Functionally, catalyzes the addition and repair of the essential 3'-terminal CCA sequence in tRNAs without using a nucleic acid template. Adds these three nucleotides in the order of C, C, and A to the tRNA nucleotide-73, using CTP and ATP as substrates and producing inorganic pyrophosphate. tRNA 3'-terminal CCA addition is required both for tRNA processing and repair. Also involved in tRNA surveillance by mediating tandem CCA addition to generate a CCACCA at the 3' terminus of unstable tRNAs. While stable tRNAs receive only 3'-terminal CCA, unstable tRNAs are marked with CCACCA and rapidly degraded. This chain is Multifunctional CCA protein, found in Escherichia coli O1:K1 / APEC.